The sequence spans 235 residues: Phosphoribosylaminoimidazole-succinocarboxamide synthase (235 aa).

This sequence belongs to the SAICAR synthetase family.

It carries out the reaction 5-amino-1-(5-phospho-D-ribosyl)imidazole-4-carboxylate + L-aspartate + ATP = (2S)-2-[5-amino-1-(5-phospho-beta-D-ribosyl)imidazole-4-carboxamido]succinate + ADP + phosphate + 2 H(+). It functions in the pathway purine metabolism; IMP biosynthesis via de novo pathway; 5-amino-1-(5-phospho-D-ribosyl)imidazole-4-carboxamide from 5-amino-1-(5-phospho-D-ribosyl)imidazole-4-carboxylate: step 1/2. The sequence is that of Phosphoribosylaminoimidazole-succinocarboxamide synthase from Clostridium perfringens (strain 13 / Type A).